A 328-amino-acid polypeptide reads, in one-letter code: Tyrosine--tRNA ligase (328 aa).

Y33 contributes to the L-tyrosine binding site. The 'HIGH' region signature appears at 38-46 (PSGVLHIGH). The L-tyrosine site is built by Y154, Q158, D161, and Q176. The tract at residues 193-227 (EPPTSLHTPLIADLGTGRGKMSSSEGVTISMEDSR) is disordered. The 'KMSKS' region motif lies at 212–216 (KMSSS). S215 is an ATP binding site.

This sequence belongs to the class-I aminoacyl-tRNA synthetase family. TyrS type 3 subfamily. As to quaternary structure, homodimer.

It is found in the cytoplasm. The enzyme catalyses tRNA(Tyr) + L-tyrosine + ATP = L-tyrosyl-tRNA(Tyr) + AMP + diphosphate + H(+). Functionally, catalyzes the attachment of tyrosine to tRNA(Tyr) in a two-step reaction: tyrosine is first activated by ATP to form Tyr-AMP and then transferred to the acceptor end of tRNA(Tyr). The polypeptide is Tyrosine--tRNA ligase (Halorubrum lacusprofundi (strain ATCC 49239 / DSM 5036 / JCM 8891 / ACAM 34)).